The following is a 308-amino-acid chain: Putative S-adenosyl-L-methionine-dependent methyltransferase Mb3816c (308 aa).

Residues Asp-131 and 160-161 (DL) contribute to the S-adenosyl-L-methionine site.

The protein belongs to the UPF0677 family.

Functionally, exhibits S-adenosyl-L-methionine-dependent methyltransferase activity. The protein is Putative S-adenosyl-L-methionine-dependent methyltransferase Mb3816c of Mycobacterium bovis (strain ATCC BAA-935 / AF2122/97).